Consider the following 581-residue polypeptide: Prolactin receptor (581 aa).

An N-terminal signal peptide occupies residues M1–G24. Over Q25–M237 the chain is Extracellular. Fibronectin type-III domains follow at residues P27–P127 and P129–D229. C36 and C46 are oxidised to a cystine. N59 is a glycosylation site (N-linked (GlcNAc...) asparagine). A disulfide bridge connects residues C75 and C86. N132 carries N-linked (GlcNAc...) asparagine glycosylation. Positions 211 and 212 each coordinate Zn(2+). A WSXWS motif motif is present at residues W215 to S219. The helical transmembrane segment at W238–L258 threads the bilayer. The Cytoplasmic portion of the chain corresponds to K259–P581. Positions I267 to K275 match the Box 1 motif motif. Disordered regions lie at residues Q324 to E384 and D458 to Q499. Composition is skewed to basic and acidic residues over residues P329–S349, H375–E384, and E469–E483.

Belongs to the type I cytokine receptor family. Type 1 subfamily. Interacts with SMARCA1. Interacts with NEK3 and VAV2 and this interaction is prolactin-dependent. In terms of tissue distribution, expressed in all tissues examined; liver, peripheral blood lymphocytes, endometrium, corpus luteum, intestine, fetal thymus, fetal spleen, fetal liver and fetal brain.

Its subcellular location is the membrane. This is a receptor for the anterior pituitary hormone prolactin. This chain is Prolactin receptor (PRLR), found in Bos taurus (Bovine).